A 421-amino-acid chain; its full sequence is Glutamate dehydrogenase (421 aa).

Residue Lys-105 is part of the active site. 220–226 (GYGNAGY) contacts NAD(+).

This sequence belongs to the Glu/Leu/Phe/Val dehydrogenases family. As to quaternary structure, homohexamer.

It localises to the cytoplasm. The protein resides in the chromosome. The catalysed reaction is L-glutamate + NAD(+) + H2O = 2-oxoglutarate + NH4(+) + NADH + H(+). It carries out the reaction L-glutamate + NADP(+) + H2O = 2-oxoglutarate + NH4(+) + NADPH + H(+). This Thermococcus kodakarensis (strain ATCC BAA-918 / JCM 12380 / KOD1) (Pyrococcus kodakaraensis (strain KOD1)) protein is Glutamate dehydrogenase (gdhA).